The following is a 157-amino-acid chain: Cytochrome b6-f complex subunit 4 (157 aa).

3 helical membrane-spanning segments follow: residues 35-55, 94-114, and 130-150; these read ILYIFPVVILGTISFSLGLGV, LVGVLSLASVPVILVLTAFIE, and LVYLTSTCYALWLGYGSVLGI.

The protein belongs to the cytochrome b family. PetD subfamily. In terms of assembly, the 4 large subunits of the cytochrome b6-f complex are cytochrome b6, subunit IV (17 kDa polypeptide, petD), cytochrome f and the Rieske protein, while the 4 small subunits are petG, petL, petM and petN. The complex functions as a dimer.

The protein localises to the plastid. It is found in the chloroplast thylakoid membrane. In terms of biological role, component of the cytochrome b6-f complex, which mediates electron transfer between photosystem II (PSII) and photosystem I (PSI), cyclic electron flow around PSI, and state transitions. This is Cytochrome b6-f complex subunit 4 from Amphidinium carterae (Dinoflagellate).